A 412-amino-acid polypeptide reads, in one-letter code: Mitochondrial distribution and morphology protein 12 (412 aa).

An SMP-LTD domain is found at 1 to 410 (MSIDLEWAKL…FPNFHTLVMG (410 aa)). Disordered stretches follow at residues 66–96 (EDDEDDSSTSPVKVTEGQLDAHGGEDDDGYE), 108–136 (YTEGGGHGGNGSHLPMHLRHPPLRSSPTD), 166–238 (QGSG…QQEN), and 314–354 (PAGD…KPLP). Positions 220-238 (NQPVFPSQQPQQQQPQQEN) are enriched in low complexity.

This sequence belongs to the MDM12 family. Component of the ER-mitochondria encounter structure (ERMES) or MDM complex, composed of MMM1, MDM10, MDM12 and MDM34. An MMM1 homodimer associates with one molecule of MDM12 on each side in a pairwise head-to-tail manner, and the SMP-LTD domains of MMM1 and MDM12 generate a continuous hydrophobic tunnel for phospholipid trafficking.

The protein localises to the mitochondrion outer membrane. Its subcellular location is the endoplasmic reticulum membrane. Functionally, component of the ERMES/MDM complex, which serves as a molecular tether to connect the endoplasmic reticulum (ER) and mitochondria. Components of this complex are involved in the control of mitochondrial shape and protein biogenesis, and function in nonvesicular lipid trafficking between the ER and mitochondria. MDM12 is required for the interaction of the ER-resident membrane protein MMM1 and the outer mitochondrial membrane-resident beta-barrel protein MDM10. The MDM12-MMM1 subcomplex functions in the major beta-barrel assembly pathway that is responsible for biogenesis of all mitochondrial outer membrane beta-barrel proteins, and acts in a late step after the SAM complex. The MDM10-MDM12-MMM1 subcomplex further acts in the TOM40-specific pathway after the action of the MDM12-MMM1 complex. Essential for establishing and maintaining the structure of mitochondria and maintenance of mtDNA nucleoids. The sequence is that of Mitochondrial distribution and morphology protein 12 from Coprinopsis cinerea (strain Okayama-7 / 130 / ATCC MYA-4618 / FGSC 9003) (Inky cap fungus).